We begin with the raw amino-acid sequence, 392 residues long: Protein O-glucosyltransferase 1 (392 aa).

Residues methionine 1–glycine 23 form the signal peptide. N-linked (GlcNAc...) asparagine glycosylation is found at asparagine 40 and asparagine 53. 4 disulfides stabilise this stretch: cysteine 49/cysteine 56, cysteine 54/cysteine 357, cysteine 102/cysteine 108, and cysteine 263/cysteine 286. The segment at methionine 103–arginine 107 is interaction with the consensus sequence C-X-S-X-[PA]-C in peptide substrates. Aspartate 133 (proton donor/acceptor) is an active-site residue. Residues alanine 172 to proline 178 are interaction with the consensus sequence C-X-S-X-[PA]-C in peptide substrates. Residue tyrosine 177 participates in UDP-alpha-D-glucose binding. Asparagine 204 carries N-linked (GlcNAc...) asparagine glycosylation. Residues serine 212, arginine 218, and valine 274–arginine 279 each bind UDP-alpha-D-glucose. The N-linked (GlcNAc...) asparagine glycan is linked to asparagine 373. The Prevents secretion from ER signature appears at lysine 389 to leucine 392.

It belongs to the glycosyltransferase 90 family. As to expression, expressed in most adult tissues at different intensities. Abundantly expressed in liver. Expressed also in brain, heart, skeletal muscle, spleen, kidney, placenta, lung and peripheral blood leukocyte. Not detectable in colon, thymus and small intestine. Expressed in the epidermis, especially in the upper parts, stratum spinosum and stratum granulosum (at protein level).

Its subcellular location is the endoplasmic reticulum lumen. The enzyme catalyses L-seryl-[EGF-like domain protein] + UDP-alpha-D-xylose = 3-O-(beta-D-xylosyl)-L-seryl-[EGF-like domain protein] + UDP + H(+). It carries out the reaction L-seryl-[EGF-like domain protein] + UDP-alpha-D-glucose = 3-O-(beta-D-glucosyl)-L-seryl-[EGF-like domain protein] + UDP + H(+). It participates in protein modification; protein glycosylation. In terms of biological role, dual specificity glycosyltransferase that catalyzes the transfer of glucose and xylose from UDP-glucose and UDP-xylose, respectively, to a serine residue found in the consensus sequence of C-X-S-X-P-C. Specifically targets extracellular EGF repeats of protein such as CRB2, F7, F9 and NOTCH2. Acts as a positive regulator of Notch signaling by mediating O-glucosylation of Notch, leading to regulate muscle development. Notch glucosylation does not affect Notch ligand binding. Required during early development to promote gastrulation: acts by mediating O-glucosylation of CRB2, which is required for CRB2 localization to the cell membrane. The protein is Protein O-glucosyltransferase 1 of Homo sapiens (Human).